A 128-amino-acid chain; its full sequence is Large ribosomal subunit protein eL8 (128 aa).

Belongs to the eukaryotic ribosomal protein eL8 family. In terms of assembly, part of the 50S ribosomal subunit. Probably part of the RNase P complex.

It is found in the cytoplasm. In terms of biological role, multifunctional RNA-binding protein that recognizes the K-turn motif in ribosomal RNA, the RNA component of RNase P, box H/ACA, box C/D and box C'/D' sRNAs. The protein is Large ribosomal subunit protein eL8 of Nitrosopumilus maritimus (strain SCM1).